The following is a 212-amino-acid chain: Uracil phosphoribosyltransferase (212 aa).

5-phospho-alpha-D-ribose 1-diphosphate contacts are provided by residues arginine 78, arginine 103, and 130-138 (DPMLATGSS). Uracil contacts are provided by residues isoleucine 193 and 198–200 (GDA). A 5-phospho-alpha-D-ribose 1-diphosphate-binding site is contributed by aspartate 199.

Belongs to the UPRTase family. Mg(2+) serves as cofactor.

It carries out the reaction UMP + diphosphate = 5-phospho-alpha-D-ribose 1-diphosphate + uracil. It participates in pyrimidine metabolism; UMP biosynthesis via salvage pathway; UMP from uracil: step 1/1. Its activity is regulated as follows. Allosterically activated by GTP. Catalyzes the conversion of uracil and 5-phospho-alpha-D-ribose 1-diphosphate (PRPP) to UMP and diphosphate. This chain is Uracil phosphoribosyltransferase, found in Pseudomonas fluorescens (strain Pf0-1).